A 447-amino-acid polypeptide reads, in one-letter code: Phosphoglucosamine mutase (447 aa).

The active-site Phosphoserine intermediate is Ser88. Mg(2+)-binding residues include Ser88, Asp231, Asp233, and Asp235. Ser88 is modified (phosphoserine).

This sequence belongs to the phosphohexose mutase family. Requires Mg(2+) as cofactor. Post-translationally, activated by phosphorylation.

The catalysed reaction is alpha-D-glucosamine 1-phosphate = D-glucosamine 6-phosphate. Functionally, catalyzes the conversion of glucosamine-6-phosphate to glucosamine-1-phosphate. The sequence is that of Phosphoglucosamine mutase from Methanococcus maripaludis (strain C5 / ATCC BAA-1333).